Here is a 361-residue protein sequence, read N- to C-terminus: Putative agmatine deiminase (361 aa).

The active-site Amidino-cysteine intermediate is the cysteine 354.

This sequence belongs to the agmatine deiminase family.

The catalysed reaction is agmatine + H2O = N-carbamoylputrescine + NH4(+). This chain is Putative agmatine deiminase, found in Streptococcus pneumoniae (strain 70585).